The chain runs to 466 residues: Secreted RxLR effector protein 101 (466 aa).

A signal peptide spans 1–21; sequence MRGAYSVITALLVVASSQIAA. Residues 48 to 63 carry the RxLR-dEER motif; the sequence is RYLRGSQHVHDSNEER. Disordered stretches follow at residues 99 to 127 and 384 to 405; these read KMPHAATAGKKVSRVTRTGKKMTSHGANA and RTFNGNTDTASLPSKRSKVRSS. Residues 109–121 are compositionally biased toward basic residues; sequence KVSRVTRTGKKMT. Residues 385 to 395 show a composition bias toward polar residues; that stretch reads TFNGNTDTASL.

This sequence belongs to the RxLR effector family.

Its subcellular location is the secreted. The protein resides in the host nucleus. Secreted effector that partially suppresses the host cell death induced by cell death-inducing proteins. The protein is Secreted RxLR effector protein 101 of Plasmopara viticola (Downy mildew of grapevine).